Consider the following 372-residue polypeptide: Heat-inducible transcription repressor HrcA (372 aa).

The disordered stretch occupies residues tyrosine 300–isoleucine 334.

The protein belongs to the HrcA family.

Its function is as follows. Negative regulator of class I heat shock genes (grpE-dnaK-dnaJ and groELS operons). Prevents heat-shock induction of these operons. This is Heat-inducible transcription repressor HrcA from Bifidobacterium longum (strain DJO10A).